The primary structure comprises 416 residues: Tyrosine-protein phosphatase non-receptor type 2 (416 aa).

The Tyrosine-protein phosphatase domain occupies 5–275 (IEREFEELDA…RFSYMAIIEG (271 aa)). Tyr-22 is subject to Phosphotyrosine. Phosphoserine is present on Ser-52. Tyr-68 carries the post-translational modification Phosphotyrosine. Substrate contacts are provided by residues Asp-182, 216 to 222 (CSAGIGR), and Gln-260. Cys-216 serves as the catalytic Phosphocysteine intermediate. Cys-216 is subject to S-nitrosocysteine. Ser-293, Ser-298, Ser-304, Ser-320, and Ser-339 each carry phosphoserine. The endoplasmic reticulum location stretch occupies residues 341–410 (ESILRKRIRE…WTLLFQLNVL (70 aa)). The tract at residues 371–410 (ERKRKRWLYWQPILTKMGFVSVILVGALVGWTLLFQLNVL) is may mediate interaction with STX17.

Belongs to the protein-tyrosine phosphatase family. Non-receptor class 1 subfamily. In terms of assembly, interacts with RMDN3. Interacts with TMED9. Interacts with STX17; dephosphorylates STX17. Interacts with ITGA1 (via cytoplasmic domain); activates the phosphatase activity towards EGFR. Interacts with TRAF2; probably involved in tumor necrosis factor-mediated signaling. Interacts with MET. Interacts with FAM220A and STAT3; interaction with FAM220A promotes interaction of PTPN2 with transcriptional activator STAT3, leading to dephosphorylation of STAT3 by PTPN2 and negative regulation of STAT3 transcriptional activator activity. Specifically phosphorylated in a cell cycle-dependent manner by cyclin-dependent kinases CDK1 and CDK2. Probably activated through phosphorylation by PKR. Does not show tissue- or cell-type specificity although levels of transcription show variability. Macrophages showed higher levels of expression than lymphocytes.

Its subcellular location is the cytoplasm. The protein localises to the endoplasmic reticulum-Golgi intermediate compartment. The protein resides in the endoplasmic reticulum. It is found in the nucleus membrane. It localises to the nucleus. Its subcellular location is the cell membrane. It carries out the reaction O-phospho-L-tyrosyl-[protein] + H2O = L-tyrosyl-[protein] + phosphate. Non-receptor type tyrosine-specific phosphatase that dephosphorylates receptor protein tyrosine kinases including INSR, EGFR, CSF1R, PDGFR. Also dephosphorylates non-receptor protein tyrosine kinases like JAK1, JAK2, JAK3, Src family kinases, STAT1, STAT3 and STAT6 either in the nucleus or the cytoplasm. Negatively regulates numerous signaling pathways and biological processes like hematopoiesis, inflammatory response, cell proliferation and differentiation, and glucose homeostasis. Plays a multifaceted and important role in the development of the immune system. Functions in T-cell receptor signaling through dephosphorylation of FYN and LCK to control T-cells differentiation and activation. Dephosphorylates CSF1R, negatively regulating its downstream signaling and macrophage differentiation. Negatively regulates cytokine (IL2/interleukin-2 and interferon)-mediated signaling through dephosphorylation of the cytoplasmic kinases JAK1, JAK3 and their substrate STAT1, that propagate signaling downstream of the cytokine receptors. Also regulates the IL6/interleukin-6 and IL4/interleukin-4 cytokine signaling through dephosphorylation of STAT3 and STAT6 respectively. In addition to the immune system, it is involved in anchorage-dependent, negative regulation of EGF-stimulated cell growth. Activated by the integrin ITGA1/ITGB1, it dephosphorylates EGFR and negatively regulates EGF signaling. Dephosphorylates PDGFRB and negatively regulates platelet-derived growth factor receptor-beta signaling pathway and therefore cell proliferation. Negatively regulates tumor necrosis factor-mediated signaling downstream via MAPK through SRC dephosphorylation. May also regulate the hepatocyte growth factor receptor signaling pathway through dephosphorylation of the hepatocyte growth factor receptor MET. Also plays an important role in glucose homeostasis. For instance, negatively regulates the insulin receptor signaling pathway through the dephosphorylation of INSR and control gluconeogenesis and liver glucose production through negative regulation of the IL6 signaling pathways. May also bind DNA. The sequence is that of Tyrosine-protein phosphatase non-receptor type 2 (Ptpn2) from Rattus norvegicus (Rat).